Here is a 284-residue protein sequence, read N- to C-terminus: Co-chaperone protein DjlA (284 aa).

At 1–6 (MHIFGK) the chain is on the periplasmic side. A helical transmembrane segment spans residues 7 to 30 (ILGAFFGLLLGGPFGLLFGLFIGH). Residues 31–284 (QFDKARRLSQ…DLIKKVKGFK (254 aa)) are Cytoplasmic-facing. In terms of domain architecture, J spans 218–284 (DAYKILDVSP…DLIKKVKGFK (67 aa)).

As to quaternary structure, homodimer.

The protein resides in the cell inner membrane. In terms of biological role, regulatory DnaK co-chaperone. Direct interaction between DnaK and DjlA is needed for the induction of the wcaABCDE operon, involved in the synthesis of a colanic acid polysaccharide capsule, possibly through activation of the RcsB/RcsC phosphotransfer signaling pathway. The colanic acid capsule may help the bacterium survive conditions outside the host. The polypeptide is Co-chaperone protein DjlA (Vibrio parahaemolyticus serotype O3:K6 (strain RIMD 2210633)).